A 357-amino-acid polypeptide reads, in one-letter code: Aspartate-semialdehyde dehydrogenase (357 aa).

8 residues coordinate NADP(+): threonine 12, glycine 13, threonine 14, valine 15, serine 37, serine 40, leucine 84, and aspartate 85. Cysteine 151 serves as the catalytic Acyl-thioester intermediate. Glycine 183 lines the NADP(+) pocket. Histidine 247 (proton acceptor) is an active-site residue. Serine 323 carries the phosphoserine modification. Residue asparagine 335 participates in NADP(+) binding.

Belongs to the aspartate-semialdehyde dehydrogenase family.

It is found in the cytoplasm. The protein resides in the cytosol. The protein localises to the nucleus. The enzyme catalyses L-aspartate 4-semialdehyde + phosphate + NADP(+) = 4-phospho-L-aspartate + NADPH + H(+). The protein operates within amino-acid biosynthesis; L-methionine biosynthesis via de novo pathway; L-homoserine from L-aspartate: step 2/3. It functions in the pathway amino-acid biosynthesis; L-threonine biosynthesis; L-threonine from L-aspartate: step 2/5. Its function is as follows. Catalyzes the NADPH-dependent formation of L-aspartate 4-semialdehyde (L-ASA) by the reductive dephosphorylation of 4-phospho-L-aspartate. Mediates the second step in the biosynthesis of amino acids that derive from aspartate (the aspartate family of amino acids), including methioinine and threonine, the latter of which is a precursor to isoleucine. In Schizosaccharomyces pombe (strain 972 / ATCC 24843) (Fission yeast), this protein is Aspartate-semialdehyde dehydrogenase.